The chain runs to 210 residues: MVMGLIGRKVGMTRIVAGDGRVLPVTVIHVAPNTVAQVKDIATDGYCAVQVATGTRRPQRVTSALAGHFRKNGIAPGRLLREFRVADTANYACGMDIDLDIFAEGQRVDVSGVSKGKGFAGAIKRHNFRSNRASHGNSLSHRAPGSIGCRQTPGRVFKGKKMAGHLGAEQVTTLNLELVRIDANRRLLMIKGAVPGARDGDVMIRPAVRG.

Residues 131–140 are compositionally biased toward polar residues; it reads NRASHGNSLS. The interval 131 to 150 is disordered; it reads NRASHGNSLSHRAPGSIGCR. Residue glutamine 151 is modified to N5-methylglutamine.

This sequence belongs to the universal ribosomal protein uL3 family. As to quaternary structure, part of the 50S ribosomal subunit. Forms a cluster with proteins L14 and L19. In terms of processing, methylated by PrmB.

One of the primary rRNA binding proteins, it binds directly near the 3'-end of the 23S rRNA, where it nucleates assembly of the 50S subunit. The protein is Large ribosomal subunit protein uL3 of Acidithiobacillus ferrooxidans (strain ATCC 23270 / DSM 14882 / CIP 104768 / NCIMB 8455) (Ferrobacillus ferrooxidans (strain ATCC 23270)).